A 421-amino-acid polypeptide reads, in one-letter code: 2',3'-cyclic-nucleotide 3'-phosphodiesterase (421 aa).

Residues serine 6 and serine 9 each carry the phosphoserine modification. Position 110 is a phosphotyrosine (tyrosine 110). At serine 170 the chain carries Phosphoserine. Histidine 251 functions as the Proton acceptor in the catalytic mechanism. Position 253 (threonine 253) interacts with substrate. Histidine 330 functions as the Proton donor in the catalytic mechanism. Threonine 332 contacts substrate. The residue at position 359 (serine 359) is a Phosphoserine. Cysteine 418 is modified (cysteine methyl ester). Cysteine 418 is lipidated: S-farnesyl cysteine. A propeptide spans 419–421 (removed in mature form); it reads TII.

This sequence belongs to the 2H phosphoesterase superfamily. CNPase family. In terms of assembly, exists as monomers and homodimers.

The protein localises to the membrane. It is found in the melanosome. The catalysed reaction is a nucleoside 2',3'-cyclic phosphate + H2O = a nucleoside 2'-phosphate + H(+). Functionally, catalyzes the formation of 2'-nucleotide products from 2',3'-cyclic substrates. May participate in RNA metabolism in the myelinating cell, CNP is the third most abundant protein in central nervous system myelin. The chain is 2',3'-cyclic-nucleotide 3'-phosphodiesterase from Homo sapiens (Human).